The sequence spans 280 residues: UPF0758 protein Atu1607 (280 aa).

Residues 1 to 22 are disordered; sequence MAKRPALPSADLSPTSGFEAGE. An MPN domain is found at 158–280; that stretch reads VLGSWSSVID…HASFKGLRLI (123 aa). Zn(2+) contacts are provided by His229, His231, and Asp242. Residues 229–242 carry the JAMM motif motif; sequence HNHPSGDPTPSRAD.

Belongs to the UPF0758 family.

The protein is UPF0758 protein Atu1607 of Agrobacterium fabrum (strain C58 / ATCC 33970) (Agrobacterium tumefaciens (strain C58)).